The following is a 908-amino-acid chain: UPF0182 protein Csac_0864 (908 aa).

A run of 7 helical transmembrane segments spans residues 22 to 42 (FVIS…DLFL), 62 to 82 (FYVK…VFFV), 98 to 118 (ISLL…ALIA), 166 to 186 (FLFY…IVLY), 208 to 228 (HIFF…KYEM), 253 to 273 (YFRL…YFFI), and 286 to 306 (SYIG…YFVV).

Belongs to the UPF0182 family.

It localises to the cell membrane. This is UPF0182 protein Csac_0864 from Caldicellulosiruptor saccharolyticus (strain ATCC 43494 / DSM 8903 / Tp8T 6331).